The sequence spans 199 residues: Carbon disulfide hydrolase (199 aa).

3 residues coordinate Zn(2+): C36, H91, and C94.

It belongs to the beta-class carbonic anhydrase family. Exists as both octamers and hexadecamers in solution. The hexadecameric homooligomer may form a catenane, through interactions of two interlocked octameric rings. Zn(2+) is required as a cofactor.

It catalyses the reaction carbon disulfide + 2 H2O = 2 hydrogen sulfide + CO2 + 2 H(+). Its pathway is sulfur metabolism; hydrogen sulfide biosynthesis. In terms of biological role, catalyzes the conversion of carbon disulfide into hydrogen sulfide and carbon dioxide, with carbonyl sulfide as an intermediate. Likely plays a key role in sulfur metabolism that allows A.thiooxidans G8 to grow on carbon disulfide as the main carbon and energy source. Does not show carbonic anhydrase activity (hydration of CO(2) to carbonate). This Acidithiobacillus thiooxidans (Thiobacillus thiooxidans) protein is Carbon disulfide hydrolase.